We begin with the raw amino-acid sequence, 447 residues long: N-succinylarginine dihydrolase (447 aa).

Substrate-binding positions include 19-28 (AGLSFGNEAS), asparagine 110, and 137-138 (HR). Residue glutamate 174 is part of the active site. Arginine 212 is a substrate binding site. Histidine 248 is a catalytic residue. Aspartate 250 and asparagine 359 together coordinate substrate. Catalysis depends on cysteine 365, which acts as the Nucleophile.

This sequence belongs to the succinylarginine dihydrolase family. In terms of assembly, homodimer.

It carries out the reaction N(2)-succinyl-L-arginine + 2 H2O + 2 H(+) = N(2)-succinyl-L-ornithine + 2 NH4(+) + CO2. It functions in the pathway amino-acid degradation; L-arginine degradation via AST pathway; L-glutamate and succinate from L-arginine: step 2/5. Its function is as follows. Catalyzes the hydrolysis of N(2)-succinylarginine into N(2)-succinylornithine, ammonia and CO(2). The protein is N-succinylarginine dihydrolase of Escherichia coli O139:H28 (strain E24377A / ETEC).